The following is a 685-amino-acid chain: Probable serine/threonine-protein kinase CPE1738 (685 aa).

The 266-residue stretch at 10-275 (YELLQCVGEG…LEKIKKDPNV (266 aa)) folds into the Protein kinase domain. ATP-binding positions include 16 to 24 (VGEGGMSFV) and lysine 39. The active-site Proton acceptor is the glutamate 143. Residues 277-339 (ISSKSAEDED…NIQTKPQKAI (63 aa)) are disordered. Positions 306–329 (EPDEDDEDDDEYYEDDEDEDEEEN) are enriched in acidic residues. PASTA domains lie at 376-440 (GKDV…TVSG), 441-508 (GEGQ…TISK), 513-581 (KSET…TINY), and 589-648 (EKPK…TMEE). A disordered region spans residues 480–500 (VPRGEVISQSPNANESVDKGS). The tract at residues 623–685 (DTAKVKSVSN…PKQPEQSGNN (63 aa)) is disordered. Composition is skewed to low complexity over residues 627 to 645 (VKSVSNSGEVEEGGSVSVT) and 654 to 685 (QPTQPNQPTQPTQPNQQAQPEQPKQPEQSGNN).

This sequence belongs to the protein kinase superfamily. Ser/Thr protein kinase family.

The enzyme catalyses L-seryl-[protein] + ATP = O-phospho-L-seryl-[protein] + ADP + H(+). It catalyses the reaction L-threonyl-[protein] + ATP = O-phospho-L-threonyl-[protein] + ADP + H(+). The sequence is that of Probable serine/threonine-protein kinase CPE1738 from Clostridium perfringens (strain 13 / Type A).